Here is a 413-residue protein sequence, read N- to C-terminus: Aspartate aminotransferase, cytoplasmic (413 aa).

L-aspartate-binding residues include Gly-39, Trp-141, and Asn-195. Lys-259 bears the N6-(pyridoxal phosphate)lysine mark. Residue Arg-387 participates in L-aspartate binding.

It belongs to the class-I pyridoxal-phosphate-dependent aminotransferase family. As to quaternary structure, homodimer. Pyridoxal 5'-phosphate is required as a cofactor.

The protein resides in the cytoplasm. The catalysed reaction is L-aspartate + 2-oxoglutarate = oxaloacetate + L-glutamate. It carries out the reaction L-cysteine + 2-oxoglutarate = 2-oxo-3-sulfanylpropanoate + L-glutamate. The enzyme catalyses (2S)-2-aminobutanoate + 2-oxoglutarate = 2-oxobutanoate + L-glutamate. It catalyses the reaction 3-sulfino-L-alanine + 2-oxoglutarate = 3-sulfinopyruvate + L-glutamate. In terms of biological role, biosynthesis of L-glutamate from L-aspartate or L-cysteine. Important regulator of levels of glutamate, the major excitatory neurotransmitter of the vertebrate central nervous system. Acts as a scavenger of glutamate in brain neuroprotection. The aspartate aminotransferase activity is involved in hepatic glucose synthesis during development and in adipocyte glyceroneogenesis. Using L-cysteine as substrate, regulates levels of mercaptopyruvate, an important source of hydrogen sulfide. Mercaptopyruvate is converted into H(2)S via the action of 3-mercaptopyruvate sulfurtransferase (3MST). Hydrogen sulfide is an important synaptic modulator and neuroprotectant in the brain. The polypeptide is Aspartate aminotransferase, cytoplasmic (Sus scrofa (Pig)).